Here is a 384-residue protein sequence, read N- to C-terminus: Protein Brevis radix-like 4 (384 aa).

Disordered stretches follow at residues 1–35 and 50–78; these read MLTCIARSKRAGDESSGQPDDPDSKNAKSLTSQLK and PCTAAQGQGQGQGPIKNNPSSSSVKSDFE. Positions 150–205 constitute a BRX 1 domain; the sequence is KEWVAQVEPGVLITFVSLPGGGNDLKRIRFSRDMFNKLQAQRWWADNYDKVMELYN. 2 disordered regions span residues 214–270 and 304–325; these read FPLP…DHNS and SIRSSSSRDADRSEEMSVSNAS. Residues 221-235 are compositionally biased toward basic and acidic residues; that stretch reads RSEDENAKVEYHPED. Polar residues predominate over residues 260–270; it reads YSSSDSLDHNS. Over residues 309 to 318 the composition is skewed to basic and acidic residues; sequence SSRDADRSEE. One can recognise a BRX 2 domain in the interval 329 to 384; sequence NEWVEQDEPGVYITIKVLPGGKRELRRVRFSRERFGEMHARLWWEENRARIHEQYL.

Belongs to the BRX family. In terms of tissue distribution, expressed in roots.

The protein localises to the nucleus. In Arabidopsis thaliana (Mouse-ear cress), this protein is Protein Brevis radix-like 4 (BRXL4).